Reading from the N-terminus, the 181-residue chain is Large ribosomal subunit protein uL5 (181 aa).

It belongs to the universal ribosomal protein uL5 family. Part of the 50S ribosomal subunit; contacts the 5S rRNA and probably tRNA. Forms a bridge to the 30S subunit in the 70S ribosome.

This is one of the proteins that bind and probably mediate the attachment of the 5S RNA into the large ribosomal subunit, where it forms part of the central protuberance. In the 70S ribosome it contacts protein S13 of the 30S subunit (bridge B1b), connecting the 2 subunits; this bridge is implicated in subunit movement. May contact the P site tRNA; the 5S rRNA and some of its associated proteins might help stabilize positioning of ribosome-bound tRNAs. This Methanococcus aeolicus (strain ATCC BAA-1280 / DSM 17508 / OCM 812 / Nankai-3) protein is Large ribosomal subunit protein uL5.